Here is a 118-residue protein sequence, read N- to C-terminus: NADH-quinone oxidoreductase subunit A 1 (118 aa).

A run of 3 helical transmembrane segments spans residues 1–21 (MLGVYLPIIVLVAVAVIFGLA), 60–80 (FYIIAMLFILFDIEAVFMYPW), and 87–107 (LGIFGVVEMGLFIVILFVGYI).

It belongs to the complex I subunit 3 family. As to quaternary structure, NDH-1 is composed of 14 different subunits. Subunits NuoA, H, J, K, L, M, N constitute the membrane sector of the complex.

The protein localises to the cell inner membrane. It catalyses the reaction a quinone + NADH + 5 H(+)(in) = a quinol + NAD(+) + 4 H(+)(out). Functionally, NDH-1 shuttles electrons from NADH, via FMN and iron-sulfur (Fe-S) centers, to quinones in the respiratory chain. The immediate electron acceptor for the enzyme in this species is believed to be ubiquinone. Couples the redox reaction to proton translocation (for every two electrons transferred, four hydrogen ions are translocated across the cytoplasmic membrane), and thus conserves the redox energy in a proton gradient. The protein is NADH-quinone oxidoreductase subunit A 1 of Geobacter sulfurreducens (strain ATCC 51573 / DSM 12127 / PCA).